The sequence spans 385 residues: 8-amino-7-oxononanoate synthase (385 aa).

Arg-27 is a binding site for substrate. Residue Gly-105–Tyr-106 participates in pyridoxal 5'-phosphate binding. His-130 provides a ligand contact to substrate. Pyridoxal 5'-phosphate is bound by residues Ser-176, Asp-201 to His-204, and Thr-232 to Lys-235. Lys-235 bears the N6-(pyridoxal phosphate)lysine mark. Thr-345 contributes to the substrate binding site.

Belongs to the class-II pyridoxal-phosphate-dependent aminotransferase family. BioF subfamily. As to quaternary structure, homodimer. Pyridoxal 5'-phosphate is required as a cofactor.

It catalyses the reaction 6-carboxyhexanoyl-[ACP] + L-alanine + H(+) = (8S)-8-amino-7-oxononanoate + holo-[ACP] + CO2. The protein operates within cofactor biosynthesis; biotin biosynthesis. In terms of biological role, catalyzes the decarboxylative condensation of pimeloyl-[acyl-carrier protein] and L-alanine to produce 8-amino-7-oxononanoate (AON), [acyl-carrier protein], and carbon dioxide. The chain is 8-amino-7-oxononanoate synthase from Mycobacterium leprae (strain Br4923).